The primary structure comprises 722 residues: Solute carrier organic anion transporter family member 4C1 (722 aa).

Residues 1–81 (MQGSKGIENP…PGSQLSELEE (81 aa)) are disordered. At 1–101 (MQGSKGIENP…QCLQRCNTPQ (101 aa)) the chain is on the cytoplasmic side. Ser15 and Ser16 each carry phosphoserine. The residue at position 19 (Thr19) is a Phosphothreonine. A phosphoserine mark is found at Ser24, Ser26, and Ser28. The segment covering 25-46 (ASPSQVEVSAVASRNQNGGSQP) has biased composition (polar residues). The helical transmembrane segment at 102–122 (GFLLHYCLLALTQGIVVNGLV) threads the bilayer. At 123–141 (NISISTIEKRYEMKSSLTG) the chain is on the extracellular side. A helical membrane pass occupies residues 142–162 (LISSSYDISFCVLSLFVSFFG). At 163–168 (ERGHKP) the chain is on the cytoplasmic side. Residues 169-193 (RWLAFASFMIGLGALVFSLPHFFSG) form a helical membrane-spanning segment. At 194-218 (RYELGSIFEDTCLTRNSTRCSSSTS) the chain is on the extracellular side. A helical membrane pass occupies residues 219 to 249 (LLSNYFYVFVLGQLLLGTGGTPLYTLGTAFI). At 250 to 269 (DDSVPTHKSSLYIGIGYSMS) the chain is on the cytoplasmic side. Residues 270–290 (ILGPAIGYVLGGQLLTMYIDI) form a helical membrane-spanning segment. Over 291–306 (AMGQSSDLTEDDPRWL) the chain is Extracellular. Residues 307 to 331 (GAWWIGFLLAWLFAWSLIMPFSCFP) form a helical membrane-spanning segment. The Cytoplasmic portion of the chain corresponds to 332–376 (KHLPGTAKIQAGKTSQTHQNNSTSFQHTDENFGKSIKDFPTAVKN). The helical transmembrane segment at 377 to 398 (LMRNTVFICLVLSTTSEALITT) threads the bilayer. Residues 399–418 (GFATFLPKFIENQFGLTSSF) lie on the Extracellular side of the membrane. The chain crosses the membrane as a helical span at residues 419–442 (AATLGGAVLIPGAALGQILGGVLV). Over 443–446 (SKFK) the chain is Cytoplasmic. Residues 447 to 470 (MKCKNTMKFALCTSGVALVLSFVF) form a helical membrane-spanning segment. At 471-578 (IYAKCENEPF…RTRCSNLPIF (108 aa)) the chain is on the extracellular side. In terms of domain architecture, Kazal-like spans 494–549 (GNLTAPCNANCNCLRSYYYPLCGSDGIQYFSPCFAGCLNSVSNRKPKVYYNCSCIE). Cystine bridges form between Cys500-Cys530, Cys506-Cys526, and Cys515-Cys547. A helical membrane pass occupies residues 579–601 (LGIFFITVIFTFMAGTPITVSIL). Residues 602 to 610 (RCVNHRHRS) are Cytoplasmic-facing. The chain crosses the membrane as a helical span at residues 611-636 (LALGVQFMLLRLLGTIPGPIIFGVII). The Extracellular segment spans residues 637-670 (DSTCVLWDVNECGIKGACWIYDNIKMAHMLVAIS). Residues 671 to 688 (VTCKVITIFFNGLAIVLY) form a helical membrane-spanning segment. At 689-722 (KPPPPGTEVSFQSQNVIVSTISVEEDLDKAENEG) the chain is on the cytoplasmic side.

The protein belongs to the organo anion transporter (TC 2.A.60) family. In terms of tissue distribution, strongly expressed in initial segment of epididymis and seminal vesicles.

The protein resides in the basolateral cell membrane. The catalysed reaction is estrone 3-sulfate(out) = estrone 3-sulfate(in). It catalyses the reaction L-thyroxine(out) = L-thyroxine(in). It carries out the reaction 3,3',5-triiodo-L-thyronine(out) = 3,3',5-triiodo-L-thyronine(in). The enzyme catalyses chenodeoxycholate(out) = chenodeoxycholate(in). The catalysed reaction is glycocholate(out) = glycocholate(in). It catalyses the reaction L-homoarginine(in) = L-homoarginine(out). It carries out the reaction L-arginine(in) = L-arginine(out). The enzyme catalyses N(omega),N(omega)-dimethyl-L-arginine(out) = N(omega),N(omega)-dimethyl-L-arginine(in). Mediates the transport of organic anions such as steroids (estrone 3-sulfate, chenodeoxycholate, glycocholate) and thyroid hormones (3,3',5-triiodo-L-thyronine (T3), L-thyroxine (T4)), in the kidney. Capable of transporting cAMP and pharmacological substances such as digoxin, ouabain and methotrexate. Transport is independent of sodium, chloride ion, and ATP. Transport activity is stimulated by an acidic extracellular environment due to increased substrate affinity to the transporter. The driving force for this transport activity is currently not known. The role of hydrogencarbonate (HCO3(-), bicarbonate) as the probable counteranion that exchanges for organic anions is still not well defined. Functions as an uptake transporter at the apical membrane, suggesting a role in renal reabsorption. Involved in the renal secretion of the uremic toxin ADMA (N(omega),N(omega)-dimethyl-L-arginine or asymmetrical dimethylarginine), which is associated to cardiovascular events and mortality, and the structurally related amino acids L-arginine and L-homoarginine (a cardioprotective biomarker). Can act bidirectionally, suggesting a dual protective role of this transport protein; exporting L-homoarginine after being synthesized in proximal tubule cells, and mediating uptake of ADMA from the blood into proximal tubule cells where it is degraded by the enzyme dimethylarginine dimethylaminohydrolase 1 (DDAH1). May be involved in sperm maturation by enabling directed movement of organic anions and compounds within or between cells. This ion-transporting process is important to maintain the strict epididymal homeostasis necessary for sperm maturation. May have a role in secretory functions since seminal vesicle epithelial cells are assumed to secrete proteins involved in decapacitation by modifying surface proteins to facilitate the acquisition of the ability to fertilize the egg. This Mus musculus (Mouse) protein is Solute carrier organic anion transporter family member 4C1.